The following is a 228-amino-acid chain: GrpE protein homolog, mitochondrial (228 aa).

Positions 46 to 57 (DEAKSEESKENN) are enriched in basic and acidic residues. The segment at 46-66 (DEAKSEESKENNEDLTEEQSE) is disordered.

The protein belongs to the GrpE family. In terms of assembly, component of the PAM complex, at least composed of SSC1 (mtHsp70), MGE1, TIM44, PAM16/TIM16, PAM17 and PAM18/TIM14. Interacts with SSQ1. In terms of processing, the N-terminus is blocked.

It is found in the mitochondrion matrix. Essential component of the PAM complex, a complex required for the translocation of transit peptide-containing proteins from the inner membrane into the mitochondrial matrix in an ATP-dependent manner. Seems to control the nucleotide-dependent binding of SSC1 to substrate proteins and the association of SSC1 with TIM44. The protein is GrpE protein homolog, mitochondrial (MGE1) of Saccharomyces cerevisiae (strain ATCC 204508 / S288c) (Baker's yeast).